The sequence spans 406 residues: 2,3-bisphosphoglycerate-independent phosphoglycerate mutase (406 aa).

This sequence belongs to the BPG-independent phosphoglycerate mutase family. A-PGAM subfamily.

It carries out the reaction (2R)-2-phosphoglycerate = (2R)-3-phosphoglycerate. The protein operates within carbohydrate degradation; glycolysis; pyruvate from D-glyceraldehyde 3-phosphate: step 3/5. Its function is as follows. Catalyzes the interconversion of 2-phosphoglycerate and 3-phosphoglycerate. The protein is 2,3-bisphosphoglycerate-independent phosphoglycerate mutase of Methanococcus maripaludis (strain C6 / ATCC BAA-1332).